Reading from the N-terminus, the 1149-residue chain is ATP-dependent helicase/deoxyribonuclease subunit B (1149 aa).

8-15 (GRAGSGKS) is an ATP binding site. Positions 788, 1106, 1109, and 1115 each coordinate [4Fe-4S] cluster.

This sequence belongs to the helicase family. AddB/RexB type 1 subfamily. In terms of assembly, heterodimer of AddA and AddB. It depends on Mg(2+) as a cofactor. [4Fe-4S] cluster serves as cofactor.

In terms of biological role, the heterodimer acts as both an ATP-dependent DNA helicase and an ATP-dependent, dual-direction single-stranded exonuclease. Recognizes the chi site generating a DNA molecule suitable for the initiation of homologous recombination. The AddB subunit has 5' -&gt; 3' nuclease activity but not helicase activity. The protein is ATP-dependent helicase/deoxyribonuclease subunit B of Ruminiclostridium cellulolyticum (strain ATCC 35319 / DSM 5812 / JCM 6584 / H10) (Clostridium cellulolyticum).